The chain runs to 527 residues: Laccase-5 (527 aa).

The N-terminal stretch at 1-23 (MGKYHSFVNVVALSLSLSGRVFG) is a signal peptide. The Plastocyanin-like 1 domain maps to 25–150 (IGPVTDLTIS…DGLRGPLVVY (126 aa)). N-linked (GlcNAc...) asparagine glycosylation is found at asparagine 74 and asparagine 77. 4 residues coordinate Cu cation: histidine 87, histidine 89, histidine 132, and histidine 134. 2 cysteine pairs are disulfide-bonded: cysteine 108–cysteine 516 and cysteine 140–cysteine 230. Asparagine 156, asparagine 209, asparagine 233, asparagine 242, asparagine 276, asparagine 317, asparagine 358, asparagine 366, asparagine 393, and asparagine 402 each carry an N-linked (GlcNAc...) asparagine glycan. The region spanning 162–306 (VDDDTTVITL…GGVNSAILRY (145 aa)) is the Plastocyanin-like 2 domain. The Plastocyanin-like 3 domain occupies 373–498 (TVPVLLQILS…AGFAIVWGED (126 aa)). The Cu cation site is built by histidine 425, histidine 428, histidine 430, histidine 480, cysteine 481, histidine 482, and histidine 486.

Belongs to the multicopper oxidase family. As to quaternary structure, homodimer. The cofactor is Cu cation.

It localises to the secreted. It carries out the reaction 4 hydroquinone + O2 = 4 benzosemiquinone + 2 H2O. Functionally, lignin degradation and detoxification of lignin-derived products. This is Laccase-5 (LCC5) from Trametes villosa (White-rot fungus).